The primary structure comprises 489 residues: UBX domain-containing protein 7 (489 aa).

The residue at position 2 (alanine 2) is an N-acetylalanine. The UBA domain maps to 2-54 (AAHGGSAASSALKGLIQQFTTITGASESVGKHMLEACNNNLEMAVTMFLDGGG). The tract at residues 56-77 (AEEPSTSSASVSTVRPHTEEEV) is disordered. The span at 59–70 (PSTSSASVSTVR) shows a compositional bias: polar residues. Lysine 84 is covalently cross-linked (Glycyl lysine isopeptide (Lys-Gly) (interchain with G-Cter in SUMO2)). A Glycyl lysine isopeptide (Lys-Gly) (interchain with G-Cter in ubiquitin) cross-link involves residue lysine 99. Lysine 134 participates in a covalent cross-link: Glycyl lysine isopeptide (Lys-Gly) (interchain with G-Cter in SUMO2). A phosphoserine mark is found at serine 278, serine 280, serine 285, and serine 288. One can recognise a UIM domain in the interval 285-304 (SEDSQLEAAIRASLQETHFD). The segment covering 300-309 (ETHFDSTQTK) has biased composition (polar residues). Residues 300-384 (ETHFDSTQTK…PGTATNHQGL (85 aa)) are disordered. At threonine 306 the chain carries Phosphothreonine. Over residues 352–366 (HKDLGHRKEENRRPL) the composition is skewed to basic and acidic residues. The 78-residue stretch at 408 to 485 (VNGPKAQLML…GLCPQETVFV (78 aa)) folds into the UBX domain.

Interacts with neddylated CUL2, ubiquitinated HIF1A, and VCP/p97.

The protein resides in the nucleus. Ubiquitin-binding adapter that links a subset of NEDD8-associated cullin ring ligases (CRLs) to the segregase VCP/p97, to regulate turnover of their ubiquitination substrates. This Homo sapiens (Human) protein is UBX domain-containing protein 7 (UBXN7).